A 551-amino-acid chain; its full sequence is Prunin 1 Pru du 6 (551 aa).

An N-terminal signal peptide occupies residues 1-20 (MAKAFVFSLCLLLVFNGCLA). Cystine bridges form between Cys-32-Cys-65 and Cys-108-Cys-374. The region spanning 37–312 (LQAREPDNRI…ALNVNEETAR (276 aa)) is the Cupin type-1 1 domain. Disordered regions lie at residues 111 to 194 (TFEE…QKTR), 238 to 293 (NPRK…NVFS), and 329 to 360 (GNLDFVQPPRGRQEREHEERQQEQLQQERQQQ). Composition is skewed to low complexity over residues 114 to 124 (ESQQSSQQGRQ), 132 to 148 (QQQQQGEQGRQQGQQEQ), and 168 to 185 (QEQQQGQQGRPQQQQQFR). Arg-194 contacts Ca(2+). Over residues 254–275 (QQGQSQPRQQGEQGRPGQHQQP) the composition is skewed to low complexity. Positions 282–293 (QEQQGNGNNVFS) are enriched in polar residues. Residues 339 to 350 (GRQEREHEERQQ) are compositionally biased toward basic and acidic residues. Residues 351–360 (EQLQQERQQQ) show a composition bias toward low complexity. An NGXEET; peptidase recognition motif motif is present at residues 367–372 (NGLEET). The 150-residue stretch at 380 to 529 (ENIGNPERAD…AYQISREQAR (150 aa)) folds into the Cupin type-1 2 domain.

The protein belongs to the 11S seed storage protein (globulins) family. Hexamer of two trimers; each subunit is composed of an acidic and a basic chain derived from a single precursor and linked by a disulfide bond. In terms of processing, proteolytically processed from a single precursor to produce an acidic and a basic chain that are linked by a disulfide bond. Expressed in seed (at protein level). Expressed in seed.

In terms of biological role, seed storage protein. This is Prunin 1 Pru du 6 from Prunus dulcis (Almond).